Consider the following 557-residue polypeptide: Selenoprotein N (557 aa).

Over residues 1 to 21 (MAADVDKTPAGEQKDDHEDRG) the composition is skewed to basic and acidic residues. A disordered region spans residues 1–28 (MAADVDKTPAGEQKDDHEDRGTPSSRRG). A helical membrane pass occupies residues 35–55 (ISSLFIIAAIPVIGVCIKYYL). Position 430 (Sec-430) is a non-standard amino acid, selenocysteine. N-linked (GlcNAc...) asparagine glycans are attached at residues Asn-451 and Asn-499.

Interacts with ryr3.

It is found in the endoplasmic reticulum membrane. Its function is as follows. Plays an important role in cell protection against oxidative stress and in the regulation of redox-related calcium homeostasis. Regulates the calcium level of the ER by protecting the calcium pump ATP2A2 against the oxidoreductase ERO1A-mediated oxidative damage. Acts as a modulator of ryanodine receptor (RyR) activity: protects RyR from oxidation due to increased oxidative stress, or directly controls the RyR redox state, regulating the RyR-mediated calcium mobilization required for normal muscle development and differentiation. Plays an important role in muscle development and differentiation during early development. Required for development of the slow muscle fiber lineage. Required for the correct organization and attachment of the myofibrils, as well as for the continuity and integrity of the connective tissue that forms the myoseptum. This Danio rerio (Zebrafish) protein is Selenoprotein N.